Reading from the N-terminus, the 2144-residue chain is Alpha-protein kinase 2 (2144 aa).

In terms of domain architecture, Ig-like 1 spans 7–105 (PERRTLCFLS…ICCSASLEVQ (99 aa)). A disulfide bridge connects residues Cys33 and Cys98. Disordered stretches follow at residues 425 to 473 (ETAK…LQTM), 500 to 575 (SLAR…GAPG), 727 to 775 (EDNE…NVGS), 845 to 864 (QTQG…DGKS), 881 to 907 (EASE…TLPY), 1011 to 1065 (SCEA…PEGQ), 1316 to 1340 (DPVE…EMEM), 1471 to 1509 (GPGE…ETEV), 1565 to 1587 (CGNH…PKGN), 1629 to 1696 (ECES…GSGH), and 1720 to 1754 (ENSR…PCKA). Residues 500–511 (SLARERTDEKYP) are compositionally biased toward basic and acidic residues. A compositionally biased stretch (basic and acidic residues) spans 853-864 (RSTDKRSQDGKS). A compositionally biased stretch (polar residues) spans 897-906 (PPSTFSSTLP). The span at 1574-1587 (DLTNTPCTSSPKGN) shows a compositional bias: polar residues. Composition is skewed to basic and acidic residues over residues 1631-1645 (ESEK…RDPC) and 1732-1754 (PKFE…PCKA). An Ig-like 2 domain is found at 1759–1847 (PVLLKRIQAE…GKVTAEFNLT (89 aa)). Cys1781 and Cys1831 form a disulfide bridge. In terms of domain architecture, Alpha-type protein kinase spans 1874 to 2106 (KEDVFNDSYF…YCKMLGLKSL (233 aa)). Positions 2109–2144 (NSQKPKKPIVGKGRVPTNATQVKTPESETPPAERKT) are disordered.

This sequence belongs to the protein kinase superfamily. Alpha-type protein kinase family. ALPK subfamily.

It is found in the basolateral cell membrane. It catalyses the reaction L-seryl-[protein] + ATP = O-phospho-L-seryl-[protein] + ADP + H(+). The catalysed reaction is L-threonyl-[protein] + ATP = O-phospho-L-threonyl-[protein] + ADP + H(+). Protein kinase that recognizes phosphorylation sites in which the surrounding peptides have an alpha-helical conformation. Regulates cardiac development and cardiomyocyte differentiation by negatively regulating Wnt/beta-catenin signaling. In Mus musculus (Mouse), this protein is Alpha-protein kinase 2.